The sequence spans 277 residues: Myelin proteolipid protein (277 aa).

The Cytoplasmic portion of the chain corresponds to 2–10; sequence GLLECCARC. Residues Cys-6, Cys-7, and Cys-10 are each lipidated (S-palmitoyl cysteine). Residues 11–36 traverse the membrane as a helical segment; that stretch reads LIGAPFASLVATGLCFFGVALFCGCG. The Extracellular segment spans residues 37–59; it reads HEALTGTEQLIETYFSKNYQDYE. Residues 60–88 traverse the membrane as a helical segment; that stretch reads YLIDVIHAFQYVIYGTASFFFLYGALLLA. The Cytoplasmic segment spans residues 89–151; that stretch reads EGFYTTGAVR…LGKWLGHPDK (63 aa). S-palmitoyl cysteine attachment occurs at residues Cys-109, Cys-139, and Cys-141. The helical transmembrane segment at 152 to 178 threads the bilayer; that stretch reads FVGITYVLTIVWLLAFACSAVPVYIYF. Topologically, residues 179 to 238 are extracellular; that stretch reads NTWTTCQSIAFPTKTTASIGTLCADARMYGVLPWNAFPGKVCGSNLLSICKTSEFQMTFH. 2 cysteine pairs are disulfide-bonded: Cys-184/Cys-228 and Cys-201/Cys-220. Thr-199 carries the O-palmitoyl threonine lipid modification. The helical transmembrane segment at 239-268 threads the bilayer; the sequence is LFIAAFVGAAATLVSLLTFMIAATYNFAVL. Topologically, residues 269 to 277 are cytoplasmic; it reads KLMGRGTKF.

This sequence belongs to the myelin proteolipid protein family.

The protein localises to the cell membrane. Its function is as follows. This is the major myelin protein from the central nervous system. It plays an important role in the formation or maintenance of the multilamellar structure of myelin. In Gallus gallus (Chicken), this protein is Myelin proteolipid protein (PLP1).